The chain runs to 235 residues: Type III pantothenate kinase (235 aa).

6-13 (DVGNTSLK) serves as a coordination point for ATP. Residues tyrosine 79 and 86–89 (GIDR) contribute to the substrate site. Aspartate 88 functions as the Proton acceptor in the catalytic mechanism. A K(+)-binding site is contributed by aspartate 109. Residue threonine 112 participates in ATP binding. A substrate-binding site is contributed by threonine 164.

The protein belongs to the type III pantothenate kinase family. As to quaternary structure, homodimer. NH4(+) is required as a cofactor. Requires K(+) as cofactor.

It is found in the cytoplasm. The catalysed reaction is (R)-pantothenate + ATP = (R)-4'-phosphopantothenate + ADP + H(+). The protein operates within cofactor biosynthesis; coenzyme A biosynthesis; CoA from (R)-pantothenate: step 1/5. Its function is as follows. Catalyzes the phosphorylation of pantothenate (Pan), the first step in CoA biosynthesis. This is Type III pantothenate kinase from Pseudoalteromonas translucida (strain TAC 125).